A 151-amino-acid polypeptide reads, in one-letter code: Acidic phospholipase A2 3 (151 aa).

Positions 1–27 (MYPAHLLVLLAVCVSLLGAASIPARPL) are cleaved as a signal peptide. 7 disulfides stabilise this stretch: C38–C104, C54–C151, C56–C72, C71–C132, C78–C125, C88–C118, and C111–C123. Residues Y55, G57, and G59 each coordinate Ca(2+). Residue H75 is part of the active site. Residue D76 coordinates Ca(2+). D126 is a catalytic residue.

It belongs to the phospholipase A2 family. Group I subfamily. D49 sub-subfamily. Requires Ca(2+) as cofactor. As to expression, expressed by the venom gland.

The protein resides in the secreted. It catalyses the reaction a 1,2-diacyl-sn-glycero-3-phosphocholine + H2O = a 1-acyl-sn-glycero-3-phosphocholine + a fatty acid + H(+). Its function is as follows. PLA2 catalyzes the calcium-dependent hydrolysis of the 2-acyl groups in 3-sn-phosphoglycerides. This is Acidic phospholipase A2 3 from Tropidechis carinatus (Australian rough-scaled snake).